The sequence spans 428 residues: Enolase (428 aa).

Gln-163 is a (2R)-2-phosphoglycerate binding site. The active-site Proton donor is the Glu-205. Asp-242, Glu-285, and Asp-312 together coordinate Mg(2+). Positions 337, 366, 367, and 388 each coordinate (2R)-2-phosphoglycerate. The active-site Proton acceptor is the Lys-337.

The protein belongs to the enolase family. Mg(2+) is required as a cofactor.

It localises to the cytoplasm. The protein localises to the secreted. It is found in the cell surface. It carries out the reaction (2R)-2-phosphoglycerate = phosphoenolpyruvate + H2O. It participates in carbohydrate degradation; glycolysis; pyruvate from D-glyceraldehyde 3-phosphate: step 4/5. Its function is as follows. Catalyzes the reversible conversion of 2-phosphoglycerate (2-PG) into phosphoenolpyruvate (PEP). It is essential for the degradation of carbohydrates via glycolysis. The polypeptide is Enolase (Neisseria gonorrhoeae (strain ATCC 700825 / FA 1090)).